Reading from the N-terminus, the 126-residue chain is Small nuclear ribonucleoprotein Sm D3 (126 aa).

Ser-2 bears the N-acetylserine mark. The 73-residue stretch at 5–77 (VPIKVLHEAE…IRFLILPDML (73 aa)) folds into the Sm domain. 5 consecutive repeat copies span residues 110-111 (RG), 112-113 (RG), 114-115 (RG), 116-117 (MG), and 118-119 (RG). The segment at 110 to 119 (RGRGRGMGRG) is 5 X 2 AA tandem repeats of [RM]-G; required for interaction with SMN1.

This sequence belongs to the snRNP core protein family. Core component of the spliceosomal U1, U2, U4 and U5 small nuclear ribonucleoproteins (snRNPs), the building blocks of the spliceosome. Most spliceosomal snRNPs contain a common set of Sm proteins, SNRPB, SNRPD1, SNRPD2, SNRPD3, SNRPE, SNRPF and SNRPG that assemble in a heptameric protein ring on the Sm site of the small nuclear RNA to form the core snRNP. Component of the U1 snRNP. The U1 snRNP is composed of the U1 snRNA and the 7 core Sm proteins SNRPB, SNRPD1, SNRPD2, SNRPD3, SNRPE, SNRPF and SNRPG, and at least three U1 snRNP-specific proteins SNRNP70/U1-70K, SNRPA/U1-A and SNRPC/U1-C. Component of the U4/U6-U5 tri-snRNP complex composed of the U4, U6 and U5 snRNAs and at least PRPF3, PRPF4, PRPF6, PRPF8, PRPF31, SNRNP200, TXNL4A, SNRNP40, SNRPB, SNRPD1, SNRPD2, SNRPD3, SNRPE, SNRPF, SNRPG, DDX23, CD2BP2, PPIH, SNU13, EFTUD2, SART1 and USP39, plus LSM2, LSM3, LSM4, LSM5, LSM6, LSM7 and LSM8. Component of the U7 snRNP complex, or U7 Sm protein core complex, that is composed of the U7 snRNA and at least LSM10, LSM11, SNRPB, SNRPD3, SNRPE, SNRPF and SNRPG; the complex does not contain SNRPD1 and SNRPD2. Component of the minor spliceosome, which splices U12-type introns. Part of the SMN-Sm complex that contains SMN1, GEMIN2/SIP1, DDX20/GEMIN3, GEMIN4, GEMIN5, GEMIN6, GEMIN7, GEMIN8, STRAP/UNRIP and the Sm proteins SNRPB, SNRPD1, SNRPD2, SNRPD3, SNRPE, SNRPF and SNRPG; catalyzes core snRNPs assembly. Forms a 6S pICln-Sm complex composed of CLNS1A/pICln, SNRPD1, SNRPD2, SNRPE, SNRPF and SNRPG; ring-like structure where CLNS1A/pICln mimics additional Sm proteins and which is unable to assemble into the core snRNP. Interacts (via C-terminus) with SMN1 (via Tudor domain); the interaction is direct. Post-translationally, methylated on arginine residues by PRMT5 and PRMT7; probable asymmetric dimethylation which is required for assembly and biogenesis of snRNPs.

It is found in the cytoplasm. It localises to the cytosol. The protein localises to the nucleus. Functionally, plays a role in pre-mRNA splicing as a core component of the spliceosomal U1, U2, U4 and U5 small nuclear ribonucleoproteins (snRNPs), the building blocks of the spliceosome. Component of both the pre-catalytic spliceosome B complex and activated spliceosome C complexes. As a component of the minor spliceosome, involved in the splicing of U12-type introns in pre-mRNAs. As part of the U7 snRNP it is involved in histone pre-mRNA 3'-end processing. This is Small nuclear ribonucleoprotein Sm D3 (SNRPD3) from Homo sapiens (Human).